The sequence spans 371 residues: NADP-dependent oxidoreductase lnaE (371 aa).

NADP(+) contacts are provided by residues 172-175 (DEIG), Lys-198, Tyr-214, Asn-237, 277-283 (YGTIAEQ), and 307-309 (FGL).

It belongs to the NADP-dependent oxidoreductase L4BD family.

The protein operates within secondary metabolite biosynthesis. Functionally, NADP-dependent oxidoreductase; part of the lna gene cluster that mediates the biosynthesis of diastereomeric piperazines. Lna and lnb clusters encode sets of enzymes that produce overlapping sets of previously undescribed metabolites such as piperazinomycin-like metabolites or morpholine. The lna and lnb biosynthetic pathways appear to be part of a signaling network that controls the formation of sclerotia, a resilient overwintering structure. One primary function of the non-canonical nonribosomal peptide synthetases lnaA and lnbA consists in the reduction of L-tyrosine. The presence in the clusters of tailoring enzymes such as the oxidoreductases lnaB, lnbB, lnaE or lnbE, as well as of the cytochrome P450 monooxygenases lnaC, lnaD, or lnbC, might explain formation of various diastereomeric piperazines. The sequence is that of NADP-dependent oxidoreductase lnaE from Aspergillus flavus (strain ATCC 200026 / FGSC A1120 / IAM 13836 / NRRL 3357 / JCM 12722 / SRRC 167).